A 403-amino-acid polypeptide reads, in one-letter code: ATP phosphoribosyltransferase regulatory subunit (403 aa).

The protein belongs to the class-II aminoacyl-tRNA synthetase family. HisZ subfamily. As to quaternary structure, heteromultimer composed of HisG and HisZ subunits.

It localises to the cytoplasm. It functions in the pathway amino-acid biosynthesis; L-histidine biosynthesis; L-histidine from 5-phospho-alpha-D-ribose 1-diphosphate: step 1/9. Required for the first step of histidine biosynthesis. May allow the feedback regulation of ATP phosphoribosyltransferase activity by histidine. This is ATP phosphoribosyltransferase regulatory subunit from Crocosphaera subtropica (strain ATCC 51142 / BH68) (Cyanothece sp. (strain ATCC 51142)).